The primary structure comprises 504 residues: Hexose transporter 1 (504 aa).

Topologically, residues 1 to 29 (MTKSSKDICSENEGKKNGKSGFFSTSFKY) are cytoplasmic. Residues 30-50 (VLSACIASFIFGYQVSVLNTI) traverse the membrane as a helical segment. The Extracellular segment spans residues 51–78 (KNFIVVEFEWCKGEKDRLNCSNNTIQSS). Residues cysteine 61 and cysteine 70 are joined by a disulfide bond. The chain crosses the membrane as a helical span at residues 79 to 99 (FLLASVFIGAVLGCGFSGYLV). Over 100 to 104 (QFGRR) the chain is Cytoplasmic. A helical membrane pass occupies residues 105–125 (LSLLIIYNFFFLVSILTSITH). Topologically, residues 126–129 (HFHT) are extracellular. A helical transmembrane segment spans residues 130–150 (ILFARLLSGFGIGLVTVSVPM). Residues 151–165 (YISEMTHKDKKGAYG) are Cytoplasmic-facing. The helical transmembrane segment at 166–186 (VMHQLFITFGIFVAVMLGLAM) threads the bilayer. Glutamine 169 serves as a coordination point for alpha-D-glucose. Glutamine 169 provides a ligand contact to beta-D-glucose. Residues 187–207 (GEGPKADSTEPLTSFAKLWWR) are Extracellular-facing. The chain crosses the membrane as a helical span at residues 208 to 228 (LMFLFPSVISLIGILALVVFF). Topologically, residues 229-293 (KEETPYFLFE…SALKIPSYRY (65 aa)) are cytoplasmic. The chain crosses the membrane as a helical span at residues 294–314 (VIILGCLLSGLQQFTGINVLV). Residues glutamine 305, glutamine 306, and asparagine 311 each contribute to the alpha-D-glucose site. Glutamine 305 contacts beta-D-glucose. Position 311 (asparagine 311) interacts with beta-D-glucose. The Extracellular portion of the chain corresponds to 315–331 (SNSNELYKEFLDSHLIT). Residues 332-352 (ILSVVMTAVNFLMTFPAIYIV) traverse the membrane as a helical segment. Residue asparagine 341 coordinates beta-D-glucose. Topologically, residues 353-358 (EKLGRK) are cytoplasmic. Residues 359 to 379 (TLLLWGCVGVLVAYLPTAIAN) form a helical membrane-spanning segment. The Extracellular portion of the chain corresponds to 380–392 (EINRNSNFVKILS). The helical transmembrane segment at 393-413 (IVATFVMIISFAVSYGPVLWI) threads the bilayer. Residue tryptophan 412 participates in alpha-D-glucose binding. Residues 414 to 429 (YLHEMFPSEIKDSAAS) are Cytoplasmic-facing. A helical membrane pass occupies residues 430–450 (LASLVNWVCAIIVVFPSDIII). Topologically, residues 451–455 (KKSPS) are extracellular. Residues 456–476 (ILFIVFSVMSILTFFFIFFFI) form a helical membrane-spanning segment. The Cytoplasmic portion of the chain corresponds to 477-504 (KETKGGEIGTSPYITMEERQKHMTKSVV).

Belongs to the major facilitator superfamily. Sugar transporter (TC 2.A.1.1) family. In terms of assembly, homodimer.

It is found in the cell membrane. It catalyses the reaction D-glucose(out) = D-glucose(in). It carries out the reaction D-fructose(out) = D-fructose(in). The enzyme catalyses D-galactose(in) = D-galactose(out). The catalysed reaction is D-mannose(out) = D-mannose(in). It catalyses the reaction D-glucosamine(out) = D-glucosamine(in). It carries out the reaction D-xylose(out) = D-xylose(in). Its activity is regulated as follows. Inhibited by cytochalasin B. Inhibited by compound 3361 (3-O-((undec-10-en)-1-yl)-D-glucose). Inhibited by compound HTI-1. Sodium-independent facilitative hexose transporter. Can transport D-glucose and D-fructose. Can transport D-mannose, D-galactose, D-xylose and D-glucosamine. The sequence is that of Hexose transporter 1 from Plasmodium falciparum (isolate 3D7).